The chain runs to 253 residues: Proteasome subunit alpha (253 aa).

Positions 232-242 are enriched in low complexity; sequence AAGASTAGEAG. The interval 232–253 is disordered; sequence AAGASTAGEAGSAEDEGSDDEK. Residues 243–253 show a composition bias toward acidic residues; sequence SAEDEGSDDEK.

This sequence belongs to the peptidase T1A family. The 20S proteasome core is composed of 14 alpha and 14 beta subunits that assemble into four stacked heptameric rings, resulting in a barrel-shaped structure. The two inner rings, each composed of seven catalytic beta subunits, are sandwiched by two outer rings, each composed of seven alpha subunits. The catalytic chamber with the active sites is on the inside of the barrel. Has a gated structure, the ends of the cylinder being occluded by the N-termini of the alpha-subunits. Is capped by the proteasome-associated ATPase, ARC.

It is found in the cytoplasm. It participates in protein degradation; proteasomal Pup-dependent pathway. Its activity is regulated as follows. The formation of the proteasomal ATPase ARC-20S proteasome complex, likely via the docking of the C-termini of ARC into the intersubunit pockets in the alpha-rings, may trigger opening of the gate for substrate entry. Interconversion between the open-gate and close-gate conformations leads to a dynamic regulation of the 20S proteasome proteolysis activity. In terms of biological role, component of the proteasome core, a large protease complex with broad specificity involved in protein degradation. The sequence is that of Proteasome subunit alpha from Streptomyces avermitilis (strain ATCC 31267 / DSM 46492 / JCM 5070 / NBRC 14893 / NCIMB 12804 / NRRL 8165 / MA-4680).